Consider the following 852-residue polypeptide: Disrupted in schizophrenia 1 homolog (852 aa).

3 disordered regions span residues 1–86 (MQGG…GLDP), 236–264 (EAEP…PRHL), and 280–320 (QVTR…QGGG). Positions 1 to 294 (MQGGGPRGAP…SSRQSECGTV (294 aa)) are interaction with MAP1A. Residues 65–79 (AGLTGQQSQHSQSKA) show a composition bias toward polar residues. Basic and acidic residues predominate over residues 253–263 (SSDRPHGDPRH). A compositionally biased stretch (low complexity) spans 288 to 311 (QSECGTVSSSSSDTGFSSQDASSA). Residues 295–693 (SSSSSDTGFS…LGRVWKADLE (399 aa)) form an interaction with TRAF3IP1 region. Coiled-coil stretches lie at residues 367–397 (EDGD…ALPS) and 449–496 (ITRR…LLRW). The required for localization to punctate cytoplasmic foci stretch occupies residues 437 to 594 (LRTTAQDSLP…LLEAKMLALS (158 aa)). A necessary and sufficient for interaction with PCNT and localization at the centrosome region spans residues 443–852 (DSLPASITRR…PTAGAQETEA (410 aa)). The interval 595–852 (GSCFSTAKEL…PTAGAQETEA (258 aa)) is interaction with ATF4 and ATF5. Disordered regions lie at residues 706-746 (EAGS…KSPL) and 833-852 (KEAG…ETEA). The interaction with NDEL1 and PAFAH1B1 stretch occupies residues 728–852 (TAALAVPRTP…PTAGAQETEA (125 aa)). The segment at 728–852 (TAALAVPRTP…PTAGAQETEA (125 aa)) is interaction with PAFAH1B1. The segment at 802-835 (SHDEALFQSLQGELQTVKETLQAMILQLQPTKEA) is interaction with NDEL1.

Interacts with NDEL1. Interacts with CCDC88A (via C-terminus); the interaction is direct. Interacts with GSK3B. Interacts with tubulin alpha, ACTN2, ANKHD1, ATF4, ATF5, CEP63, EIF3S3, MAP1A, NDEL1, PAFAH1B1, RANBP9, SPTBN4, SYNE1 and TRAF3IP1. Interaction with microtubules may be mediated in part by TRAF3IP1. Interacts (via C-terminal) with PCNT. Interacts with CHCHD6. Interacts with CCDC141. Interacts with FBXW7, the substrate-recognition component of a SCF (SKP1-CUL1-F-box protein) E3 ubiquitin-protein ligase complex; the interaction targets DISC1 for proteasomal degradation. Interacts with ZNF365. Interacts with ATF4; inhibiting ATF4 transcription factor activity by disrupting ATF4 dimerization and DNA-binding. Interacts with PDE4B. Post-translationally, ubiquitinated. Ubiquitination with 'Lys-48'-linked polyubiquitin chains leads to its proteasomal degradation. In terms of tissue distribution, expressed in granule cell precursors within the dentate migratory stream during the first week of postnatal life and in differentiated granule cells of the hippocampus (at protein level). Detected in heart, brain, kidney, and testis. Expressed in dentate gyrus, hippocampus and in the olfactory bulb.

It localises to the cytoplasm. The protein localises to the cytoskeleton. The protein resides in the mitochondrion. Its subcellular location is the microtubule organizing center. It is found in the centrosome. It localises to the postsynaptic density. In terms of biological role, involved in the regulation of multiple aspects of embryonic and adult neurogenesis. Required for neural progenitor proliferation in the ventrical/subventrical zone during embryonic brain development and in the adult dentate gyrus of the hippocampus. Participates in the Wnt-mediated neural progenitor proliferation as a positive regulator by modulating GSK3B activity and CTNNB1 abundance. Plays a role as a modulator of the AKT-mTOR signaling pathway controlling the tempo of the process of newborn neurons integration during adult neurogenesis, including neuron positioning, dendritic development and synapse formation. Inhibits the activation of AKT-mTOR signaling upon interaction with CCDC88A. Regulates the migration of early-born granule cell precursors toward the dentate gyrus during the hippocampal development. Inhibits ATF4 transcription factor activity in neurons by disrupting ATF4 dimerization and DNA-binding. Plays a role, together with PCNT, in the microtubule network formation. The polypeptide is Disrupted in schizophrenia 1 homolog (Mus musculus (Mouse)).